The following is a 521-amino-acid chain: Type-2 serine--tRNA ligase (521 aa).

A316 serves as a coordination point for L-serine. C318 serves as a coordination point for Zn(2+). Residue R347 participates in L-serine binding. ATP contacts are provided by residues 347–349 (RWE) and 358–359 (RV). 364-366 (RVE) lines the L-serine pocket. The Zn(2+) site is built by E366 and C473. Position 480 (R480) interacts with ATP.

Belongs to the class-II aminoacyl-tRNA synthetase family. Type-2 seryl-tRNA synthetase subfamily. As to quaternary structure, homodimer. It depends on Zn(2+) as a cofactor.

It localises to the cytoplasm. It catalyses the reaction tRNA(Ser) + L-serine + ATP = L-seryl-tRNA(Ser) + AMP + diphosphate + H(+). The enzyme catalyses tRNA(Sec) + L-serine + ATP = L-seryl-tRNA(Sec) + AMP + diphosphate + H(+). The protein operates within aminoacyl-tRNA biosynthesis; selenocysteinyl-tRNA(Sec) biosynthesis; L-seryl-tRNA(Sec) from L-serine and tRNA(Sec): step 1/1. Its function is as follows. Catalyzes the attachment of serine to tRNA(Ser). Is also able to aminoacylate tRNA(Sec) with serine, to form the misacylated tRNA L-seryl-tRNA(Sec), which will be further converted into selenocysteinyl-tRNA(Sec). The protein is Type-2 serine--tRNA ligase (serS) of Methanocaldococcus jannaschii (strain ATCC 43067 / DSM 2661 / JAL-1 / JCM 10045 / NBRC 100440) (Methanococcus jannaschii).